The sequence spans 152 residues: Proteolipid protein 2 (152 aa).

The MARVEL domain occupies 19 to 137 (FSRTRKGFLL…DAYITFPLRQ (119 aa)). The next 3 membrane-spanning stretches (helical) occupy residues 25 to 45 (GFLL…FSTS), 48 to 68 (GYSF…VVYM), and 85 to 105 (FFRT…VLVE). N108 is a glycosylation site (N-linked (GlcNAc...) asparagine). Residues 112-132 (IAAGALGLCAAGLFGYDAYIT) form a helical membrane-spanning segment.

Its subcellular location is the membrane. In terms of biological role, may play a role in cell differentiation in the intestinal epithelium. In Bos taurus (Bovine), this protein is Proteolipid protein 2 (PLP2).